The sequence spans 84 residues: Seminal ribonuclease (84 aa).

Intrachain disulfides connect Cys10/Cys65, Cys28/Cys80, and Cys35/Cys42. Substrate contacts are provided by residues 11-15 (KPVNT), Lys36, and Arg55.

This sequence belongs to the pancreatic ribonuclease family. As to quaternary structure, homodimer; disulfide-linked.

It is found in the secreted. It catalyses the reaction an [RNA] containing cytidine + H2O = an [RNA]-3'-cytidine-3'-phosphate + a 5'-hydroxy-ribonucleotide-3'-[RNA].. The catalysed reaction is an [RNA] containing uridine + H2O = an [RNA]-3'-uridine-3'-phosphate + a 5'-hydroxy-ribonucleotide-3'-[RNA].. The chain is Seminal ribonuclease (SRN) from Giraffa camelopardalis (Giraffe).